Here is a 319-residue protein sequence, read N- to C-terminus: Na(+)-translocating NADH-quinone reductase subunit C (319 aa).

Residues 14 to 34 (WYVILFIFALSLFSSVFLSTV) traverse the membrane as a helical segment. Residue threonine 283 is modified to FMN phosphoryl threonine.

It belongs to the NqrC family. Composed of six subunits; NqrA, NqrB, NqrC, NqrD, NqrE and NqrF. FMN is required as a cofactor.

It is found in the cell inner membrane. It catalyses the reaction a ubiquinone + n Na(+)(in) + NADH + H(+) = a ubiquinol + n Na(+)(out) + NAD(+). In terms of biological role, NQR complex catalyzes the reduction of ubiquinone-1 to ubiquinol by two successive reactions, coupled with the transport of Na(+) ions from the cytoplasm to the periplasm. NqrA to NqrE are probably involved in the second step, the conversion of ubisemiquinone to ubiquinol. This chain is Na(+)-translocating NADH-quinone reductase subunit C, found in Chlamydia caviae (strain ATCC VR-813 / DSM 19441 / 03DC25 / GPIC) (Chlamydophila caviae).